Here is a 564-residue protein sequence, read N- to C-terminus: Kelch-like protein 12 (564 aa).

Residues 29-96 (CDITLRVEGT…VYTETVLVTV (68 aa)) enclose the BTB domain. The BACK domain maps to 131–232 (CLGIRDFAET…LTPRYITDVI (102 aa)). Kelch repeat units follow at residues 278–325 (VLLV…ALND), 327–375 (VYVI…TLGD), 376–422 (MIYV…VASG), 423–469 (LIYC…LLND), 471–516 (IYVV…VLRG), and 518–563 (LYAI…VLRE).

Component of the BCR(KLHL12) E3 ubiquitin ligase complex.

It is found in the cytoplasmic vesicle. It localises to the COPII-coated vesicle. It functions in the pathway protein modification; protein ubiquitination. Functionally, substrate-specific adapter of a BCR (BTB-CUL3-RBX1) E3 ubiquitin ligase complex that acts as a negative regulator of Wnt signaling pathway and ER-Golgi transport. The BCR(KLHL12) complex is involved in ER-Golgi transport by regulating the size of COPII coats, thereby playing a key role in collagen export, which is required for embryonic stem (ES) cells division. Negatively regulates the Wnt signaling pathway, possibly via the targeted ubiquitination and subsequent proteolysis of dvl2 and dvl3. Regulates convergent-extension movements during early embryonic development. In Danio rerio (Zebrafish), this protein is Kelch-like protein 12 (klhl12).